A 409-amino-acid chain; its full sequence is Methylthioribose-1-phosphate isomerase (409 aa).

Asp277 acts as the Proton donor in catalysis.

The protein belongs to the eIF-2B alpha/beta/delta subunits family. MtnA subfamily.

The protein resides in the cytoplasm. Its subcellular location is the nucleus. It carries out the reaction 5-(methylsulfanyl)-alpha-D-ribose 1-phosphate = 5-(methylsulfanyl)-D-ribulose 1-phosphate. It participates in amino-acid biosynthesis; L-methionine biosynthesis via salvage pathway; L-methionine from S-methyl-5-thio-alpha-D-ribose 1-phosphate: step 1/6. Its function is as follows. Catalyzes the interconversion of methylthioribose-1-phosphate (MTR-1-P) into methylthioribulose-1-phosphate (MTRu-1-P). The sequence is that of Methylthioribose-1-phosphate isomerase from Scheffersomyces stipitis (strain ATCC 58785 / CBS 6054 / NBRC 10063 / NRRL Y-11545) (Yeast).